Here is a 222-residue protein sequence, read N- to C-terminus: Charged multivesicular body protein 4a (222 aa).

2 disordered regions span residues 1–21 (MSGLGRLFGRGKKEKGPTPEE) and 177–222 (LLHV…EWVS). Positions 1-116 (MSGLGRLFGR…ELAAQGLKKA (116 aa)) are interaction with phosphoinosides. The interval 1 to 150 (MSGLGRLFGR…QISDAISRPV (150 aa)) is intramolecular interaction with C-terminus. 2 coiled-coil regions span residues 20–105 (EEAI…VLRT) and 155–180 (DVDEDELLEELEELEQEELARELLHV). The segment at 151–222 (GFGDDVDEDE…ELKQLAEWVS (72 aa)) is intramolecular interaction with N-terminus. Ser196 carries the phosphoserine modification.

This sequence belongs to the SNF7 family. As to quaternary structure, probable core component of the endosomal sorting required for transport complex III (ESCRT-III). ESCRT-III components are thought to multimerize to form a flat lattice on the perimeter membrane of the endosome. Several assembly forms of ESCRT-III may exist that interact and act sequentially. Self-associates; overexpression leads to the assembly of filaments that curve and associate to create circular rings. Interacts with CHMP2A. Interacts with CHMP3; the interaction requires the release of CHMP4A autoinhibition. Interacts with CHMP4B. Interacts with CHMP4C. Interacts with CHMP6. Interacts with VPS4A. Interacts with PDCD6IP; the interaction is direct.

It localises to the cytoplasmic vesicle membrane. The protein resides in the late endosome membrane. Its function is as follows. Probable core component of the endosomal sorting required for transport complex III (ESCRT-III) which is involved in multivesicular bodies (MVBs) formation and sorting of endosomal cargo proteins into MVBs. MVBs contain intraluminal vesicles (ILVs) that are generated by invagination and scission from the limiting membrane of the endosome and mostly are delivered to lysosomes enabling degradation of membrane proteins, such as stimulated growth factor receptors, lysosomal enzymes and lipids. The MVB pathway appears to require the sequential function of ESCRT-O, -I,-II and -III complexes. ESCRT-III proteins mostly dissociate from the invaginating membrane before the ILV is released. The ESCRT machinery also functions in topologically equivalent membrane fission events, such as the terminal stages of cytokinesis and the budding of enveloped viruses (lentiviruses). ESCRT-III proteins are believed to mediate the necessary vesicle extrusion and/or membrane fission activities, possibly in conjunction with the AAA ATPase VPS4. When overexpressed, membrane-assembled circular arrays of CHMP4A filaments can promote or stabilize negative curvature and outward budding. CHMP4A/B/C are required for the exosomal release of SDCBP, CD63 and syndecan. The protein is Charged multivesicular body protein 4a (CHMP4A) of Bos taurus (Bovine).